A 357-amino-acid polypeptide reads, in one-letter code: Serine/threonine-protein kinase nekl-2 (357 aa).

One can recognise a Protein kinase domain in the interval 4–267 (YEKVRVVGRG…VSQLLSDPLV (264 aa)). ATP is bound by residues 10-18 (VGRGAFGVC) and Lys-35. Asp-137 acts as the Proton acceptor in catalysis. Basic and acidic residues predominate over residues 281–290 (IEPPPTDKRK). Residues 281–357 (IEPPPTDKRK…QSRSQVHSKY (77 aa)) form a disordered region. Composition is skewed to polar residues over residues 293–327 (ASLS…QLTP) and 336–357 (FFSS…HSKY).

The protein belongs to the protein kinase superfamily. NEK Ser/Thr protein kinase family. NIMA subfamily. The cofactor is Mg(2+). In terms of tissue distribution, expressed in hypodermal cells including in hyp7 syncytium but not in seam cells.

It is found in the cytoplasm. It carries out the reaction L-seryl-[protein] + ATP = O-phospho-L-seryl-[protein] + ADP + H(+). The catalysed reaction is L-threonyl-[protein] + ATP = O-phospho-L-threonyl-[protein] + ADP + H(+). Its function is as follows. Probable serine/threonine-protein kinase required for the completion of molting. May play a role in endocytosis in the hypodermis syncytium. The polypeptide is Serine/threonine-protein kinase nekl-2 (Caenorhabditis elegans).